We begin with the raw amino-acid sequence, 455 residues long: GTPase Der (455 aa).

EngA-type G domains are found at residues Pro4–Asp169 and Ile178–Arg353. GTP is bound by residues Gly10–Ser17, Asp57–Leu61, Asn120–Glu123, Gly184–Ser191, Asp231–Ile235, and Asn296–Asp299. Residues Arg354 to Gln439 form the KH-like domain.

Belongs to the TRAFAC class TrmE-Era-EngA-EngB-Septin-like GTPase superfamily. EngA (Der) GTPase family. In terms of assembly, associates with the 50S ribosomal subunit.

GTPase that plays an essential role in the late steps of ribosome biogenesis. This chain is GTPase Der, found in Synechococcus sp. (strain CC9902).